An 81-amino-acid polypeptide reads, in one-letter code: MALMIEKLAPPSKRSMTKFTQHCTGNCGQFWPKTWFWSRSSFIHWRLVSRHWPLAPFQLPKTTMAYALVNTKLSALRDIGN.

In terms of biological role, part of the gene cluster that mediates the biosynthesis of elsinochrome C, a perelyenequinone phytotoxin structurally similar to cercosporin. The first step of elsinochrome C biosynthesis is performed by the polyketide synthase elcA which catalyzes the formation of nor-toralactone. The starter unit acyltransferase (SAT) domain of elcA initiates polyketide extension by the selective utilization of acetyl-CoA, which is elongated to the heptaketide in the beta-ketoacyl synthase (KS) domain by successive condensations with six malonyl units introduced by the malonyl acyltransferase (MAT) domain. The product template (PT) domain catalyzes C4-C9 and C2-C11 aldol cyclizations and dehydrations to a trihydroxynaphthalene, which is thought to be delivered to the thioesterase (TE) domain for product release. The bifunctional enzyme elcB then methylates nor-toralactone to toralactone before conducting an unusual oxidative aromatic ring opening. The next step in perylenequinone biosynthesis is an O-methylation at the nascent OH-6 of the elcB product performed by the O-methyltransferase elcD. The oxidative coupling of the two monomeric naphthol units in perylenequinone biosynthesis is catalyzed by the FAD-dependent monooxygenase elcE and the multicopper oxidase elcG. ElcG might catalyze the first intermolecular coupling in a regio- and stereo-selective manner via a phenol radical coupling mechanism and the elcE could forge the second C-C bond intramolecularly via a hydride transfer mechanism. The fasciclin domain-containing protein elcF might also play a role duting this step. The last piece of the puzzle in the biosynthesis of elsinochrome C is the additional annulation by enolate coupling to afford the dihydrobenzo(ghi)perylenequinone system, catalyzed by the FAD-dependent monooxygenase elcH. This is Elsinochrome C biosynthesis cluster protein SNOG_08613 from Phaeosphaeria nodorum (strain SN15 / ATCC MYA-4574 / FGSC 10173) (Glume blotch fungus).